A 120-amino-acid polypeptide reads, in one-letter code: Ribonuclease P protein component (120 aa).

The protein belongs to the RnpA family. In terms of assembly, consists of a catalytic RNA component (M1 or rnpB) and a protein subunit.

The enzyme catalyses Endonucleolytic cleavage of RNA, removing 5'-extranucleotides from tRNA precursor.. Its function is as follows. RNaseP catalyzes the removal of the 5'-leader sequence from pre-tRNA to produce the mature 5'-terminus. It can also cleave other RNA substrates such as 4.5S RNA. The protein component plays an auxiliary but essential role in vivo by binding to the 5'-leader sequence and broadening the substrate specificity of the ribozyme. This chain is Ribonuclease P protein component, found in Latilactobacillus sakei subsp. sakei (strain 23K) (Lactobacillus sakei subsp. sakei).